Consider the following 249-residue polypeptide: Probable transcriptional regulatory protein Csal_1845 (249 aa).

Belongs to the TACO1 family.

It localises to the cytoplasm. The protein is Probable transcriptional regulatory protein Csal_1845 of Chromohalobacter salexigens (strain ATCC BAA-138 / DSM 3043 / CIP 106854 / NCIMB 13768 / 1H11).